We begin with the raw amino-acid sequence, 368 residues long: Cyclic GMP-AMP synthase-like receptor (368 aa).

Residues serine 60 and 72–74 (EYD) contribute to the ATP site. Mg(2+) contacts are provided by glutamate 72, aspartate 74, and aspartate 190. Residues aspartate 190 and 229-236 (RASFYRQE) contribute to the GTP site. Residues 233–236 (YRQE), lysine 254, and 268–272 (SYFIK) each bind ATP.

This sequence belongs to the mab-21 family. The cofactor is Mg(2+). Mn(2+) is required as a cofactor.

It carries out the reaction GTP + ATP = 3',2'-cGAMP + 2 diphosphate. It catalyses the reaction GTP + ATP = pppA(2'-5')pG + diphosphate. The enzyme catalyses pppA(2'-5')pG = 3',2'-cGAMP + diphosphate. With respect to regulation, the enzyme activity is specifically activated by double-stranded RNA (dsRNA). Nucleotidyltransferase that catalyzes the formation of cyclic GMP-AMP (3',2'-cGAMP) from ATP and GTP and plays a key role in innate immunity. Synthesizes 3',2'-cGAMP in a two-step reaction through production of the linear intermediate pppA(2'-5')pG. Acts as a key sensor of double-stranded RNA (dsRNA), the presence of dsRNA in the cytoplasm being a danger signal that triggers the immune responses. Directly binds dsRNA, activating the nucleotidyltransferase activity, leading to synthesis of 3',2'-cGAMP, a second messenger that binds to and activates Sting, thereby triggering the antiviral immune response via activation of the NF-kappa-B transcription factor Rel (Relish). This chain is Cyclic GMP-AMP synthase-like receptor, found in Lucilia cuprina (Green bottle fly).